We begin with the raw amino-acid sequence, 1488 residues long: Chromosome partition protein MukB (1488 aa).

An ATP-binding site is contributed by 34 to 41 (GGNGAGKS). Coiled-coil stretches lie at residues 326-418 (LEAD…QYNQ), 444-472 (LDTFQAKEQEATEKLLSLEQKMSVAQTAH), and 509-602 (RHLA…RRAP). A flexible hinge region spans residues 666 to 783 (PGGAEDQRLN…SLPIFGRAAR (118 aa)). Coiled-coil stretches lie at residues 835–923 (EAEI…AKLE), 977–1116 (EMLS…AKAG), and 1209–1265 (VEAI…LQSV). The disordered stretch occupies residues 1049–1074 (ADSGAEERARQRRDELHAQLSNNRSR). Basic and acidic residues predominate over residues 1051–1065 (SGAEERARQRRDELH).

The protein belongs to the SMC family. MukB subfamily. In terms of assembly, homodimerization via its hinge domain. Binds to DNA via its C-terminal region. Interacts, and probably forms a ternary complex, with MukE and MukF via its C-terminal region. The complex formation is stimulated by calcium or magnesium. Interacts with tubulin-related protein FtsZ.

Its subcellular location is the cytoplasm. The protein resides in the nucleoid. Functionally, plays a central role in chromosome condensation, segregation and cell cycle progression. Functions as a homodimer, which is essential for chromosome partition. Involved in negative DNA supercoiling in vivo, and by this means organize and compact chromosomes. May achieve or facilitate chromosome segregation by condensation DNA from both sides of a centrally located replisome during cell division. This chain is Chromosome partition protein MukB, found in Salmonella agona (strain SL483).